The chain runs to 72 residues: Conotoxin VnMKLT2-0221 (72 aa).

A signal peptide spans 1 to 22 (MKLTCVLIVAVLFLTACQLTTA). A propeptide spanning residues 23 to 45 (ASYARSERQHPDLGSSDQNSKLT) is cleaved from the precursor. A disordered region spans residues 26–45 (ARSERQHPDLGSSDQNSKLT). 3 disulfide bridges follow: Cys48-Cys62, Cys55-Cys66, and Cys61-Cys71.

This sequence belongs to the conotoxin O1 superfamily. In terms of tissue distribution, expressed by the venom duct.

The protein resides in the secreted. This Conus ventricosus (Mediterranean cone) protein is Conotoxin VnMKLT2-0221.